Reading from the N-terminus, the 141-residue chain is Hemoglobin subunit alpha-A/A' (141 aa).

The Globin domain maps to 1–141 (VLSANDKTNV…VGNVLTAKYR (141 aa)). Residue histidine 58 coordinates O2. Histidine 87 is a heme b binding site.

This sequence belongs to the globin family. In terms of assembly, heterotetramer of two alpha chains and two beta chains. As to expression, red blood cells.

Its function is as follows. Involved in oxygen transport from the lung to the various peripheral tissues. In Gyps rueppelli (Rueppell's griffon), this protein is Hemoglobin subunit alpha-A/A' (HBAA).